Reading from the N-terminus, the 218-residue chain is Small ribosomal subunit protein uS3c (218 aa).

The KH type-2 domain occupies 47–118 (VQKHMRVSSG…RLNIAITRVA (72 aa)).

The protein belongs to the universal ribosomal protein uS3 family. In terms of assembly, part of the 30S ribosomal subunit.

It localises to the plastid. The protein localises to the chloroplast. The polypeptide is Small ribosomal subunit protein uS3c (rps3) (Illicium oligandrum (Star anise)).